Consider the following 959-residue polypeptide: MTVKCANDLDTHTKPPFVARMIHRFAVPIILVWLAIAVTVSVFIPSLEDVGQERSVSLSPKDAPSYIAMQKMGQVFNEGNSDSVIMIVLEGDKPLGDDAHRFYDGLIRKLRADKHVQSVQDFWGDPLTAPGAQSNDGKAAYVQLSLAGNQGELLAQESIDAVRKIVVQTPAPPGITAWVTGASALIADMHHSGDKSMIRITATSVIVILVTLLLVYRSFITVILLLFTVGIESAVARGVVALLGHTGLIGLSTFAVNLLTSLAIAAGTDYGIFITGRYQEARQANENKEAAFYTMYRGTFHVILGSGLTISGATFCLSFARMPYFQTLGVPCAVGMLIAVAVALTLGPAVLTVGSRFGLFEPKRLIKVRGWRRIGTVVVRWPLPILITTCAIAMVGLLALPGYRTNYKDRAYLPASIPANQGFAAADRHFPQARMKPEILMIESDHDMRNPADFLILDKLARGIFRVPGISRVQAITRPDGTAMDHTSIPFQISMQNAGQVQTMKYQKDRMNDLLRQAENMAETIASMRRMHQLMALLTENTHHILNDTVEMQKTTSKLRDEIANFDDFWRPIRSYFYWERHCFNIPICWSFRSIFDALDGVDQIDERLNSIVGDIKNMDLLMPQMLEQFPPMIESMESMRTIMLTMHSTMSGIFDQMNELSDNANTMGKAFDTAKNDDSFYLPPEVFKNTDFKRAMKSFLSSDGHAARFIILHRGDPASVAGIASINAIRTAAEEALKGTPLEDTKIYLAGTAAVFKDIDEGANWDLVIAGISSLCLIFIIMLIITRAFVAAAVIVGTVALSLGASFGLSVLLWQHILGIELHYLVLAMSVIVLLAVGSDYNLLLVSRFKQEIQAGLKTGIIRSMGGTGKVVTNAGLVFAFTMASMVVSDLRVIGQVGTTIGLGLLFDTLIVRSFMMPSIAALLGRWFWWPQQGRTRPLLTVAAPVGLPPDRSLVYSD.

Transmembrane regions (helical) follow at residues 25 to 45 (FAVP…VFIP), 205 to 225 (VIVI…VILL), 239 to 259 (VVAL…VNLL), 300 to 320 (FHVI…LSFA), 333 to 353 (AVGM…VLTV), 381 to 401 (WPLP…LALP), 766 to 786 (WDLV…MLII), 790 to 810 (FVAA…SFGL), 818 to 838 (ILGI…LLAV), 872 to 892 (VVTN…VSDL), and 902 to 922 (IGLG…PSIA).

The protein belongs to the resistance-nodulation-cell division (RND) (TC 2.A.6) family. MmpL subfamily.

The protein localises to the cell membrane. This is Probable transport protein MmpL4 (mmpL4) from Mycobacterium leprae (strain TN).